We begin with the raw amino-acid sequence, 199 residues long: uncharacterized protein (199 aa).

A disordered region spans residues 1 to 48 (MSANEFYSSGQQGQYNQQNNQERTGAPNNGQYGADNGNPNGERGLFST). Serine 2 is subject to N-acetylserine. Positions 7–21 (YSSGQQGQYNQQNNQ) are enriched in low complexity. The span at 22 to 31 (ERTGAPNNGQ) shows a compositional bias: polar residues. Residues serine 53 and serine 70 each carry the phosphoserine modification. The interval 89 to 199 (RKEHKQQEQY…RQGFNGGSRW (111 aa)) is disordered. Composition is skewed to gly residues over residues 124-163 (GGFGGPGGPGGQGFGRQGPQGFGGPGPQEFGGPGGQGFGG), 170-179 (GGPGGQGFGG), and 186-199 (GGQGRQGFNGGSRW).

The protein resides in the mitochondrion. This is an uncharacterized protein from Saccharomyces cerevisiae (strain ATCC 204508 / S288c) (Baker's yeast).